The primary structure comprises 272 residues: Large ribosomal subunit protein uL3 (272 aa).

The tract at residues 125–146 (QHIGPKSHGGGGGSQPLRQTGS) is disordered.

Belongs to the universal ribosomal protein uL3 family. Part of the 50S ribosomal subunit. Forms a cluster with proteins L14 and L19.

In terms of biological role, one of the primary rRNA binding proteins, it binds directly near the 3'-end of the 23S rRNA, where it nucleates assembly of the 50S subunit. The protein is Large ribosomal subunit protein uL3 of Metamycoplasma arthritidis (strain 158L3-1) (Mycoplasma arthritidis).